The sequence spans 481 residues: Protein JASON (481 aa).

Positions 226-250 are disordered; that stretch reads ECDLDQSNSSNSSENGSSRKPEMGG. A compositionally biased stretch (low complexity) spans 232–241; it reads SNSSNSSENG.

Functionally, required for normal spindle orientation at male meiosis II and normal formation of tetrad of microspores. Acts as a positive regulator of PS1 in male sporogenesis. Not involved in female meiosis. This chain is Protein JASON, found in Arabidopsis thaliana (Mouse-ear cress).